A 440-amino-acid polypeptide reads, in one-letter code: Ribulose bisphosphate carboxylase large chain (440 aa).

Lys3 carries the N6,N6,N6-trimethyllysine modification. Residues Asn112 and Thr162 each contribute to the substrate site. Residue Lys164 is the Proton acceptor of the active site. Substrate is bound at residue Lys166. Lys190, Asp192, and Glu193 together coordinate Mg(2+). Lys190 bears the N6-carboxylysine mark. The active-site Proton acceptor is His283. Substrate is bound by residues Arg284, His316, and Ser368.

It belongs to the RuBisCO large chain family. Type I subfamily. In terms of assembly, heterohexadecamer of 8 large chains and 8 small chains; disulfide-linked. The disulfide link is formed within the large subunit homodimers. Mg(2+) serves as cofactor. The disulfide bond which can form in the large chain dimeric partners within the hexadecamer appears to be associated with oxidative stress and protein turnover.

The protein resides in the plastid. It localises to the chloroplast. It catalyses the reaction 2 (2R)-3-phosphoglycerate + 2 H(+) = D-ribulose 1,5-bisphosphate + CO2 + H2O. The enzyme catalyses D-ribulose 1,5-bisphosphate + O2 = 2-phosphoglycolate + (2R)-3-phosphoglycerate + 2 H(+). Functionally, ruBisCO catalyzes two reactions: the carboxylation of D-ribulose 1,5-bisphosphate, the primary event in carbon dioxide fixation, as well as the oxidative fragmentation of the pentose substrate in the photorespiration process. Both reactions occur simultaneously and in competition at the same active site. This chain is Ribulose bisphosphate carboxylase large chain, found in Bambusa multiplex (Hedge bamboo).